A 263-amino-acid chain; its full sequence is 3-methyl-2-oxobutanoate hydroxymethyltransferase (263 aa).

2 residues coordinate Mg(2+): Asp-45 and Asp-84. 3-methyl-2-oxobutanoate is bound by residues 45-46 (DS), Asp-84, and Lys-112. Glu-114 contacts Mg(2+). Glu-180 serves as the catalytic Proton acceptor.

This sequence belongs to the PanB family. In terms of assembly, homodecamer; pentamer of dimers. Mg(2+) is required as a cofactor.

It is found in the cytoplasm. It carries out the reaction 3-methyl-2-oxobutanoate + (6R)-5,10-methylene-5,6,7,8-tetrahydrofolate + H2O = 2-dehydropantoate + (6S)-5,6,7,8-tetrahydrofolate. Its pathway is cofactor biosynthesis; (R)-pantothenate biosynthesis; (R)-pantoate from 3-methyl-2-oxobutanoate: step 1/2. Functionally, catalyzes the reversible reaction in which hydroxymethyl group from 5,10-methylenetetrahydrofolate is transferred onto alpha-ketoisovalerate to form ketopantoate. This chain is 3-methyl-2-oxobutanoate hydroxymethyltransferase, found in Klebsiella pneumoniae (strain 342).